The sequence spans 418 residues: Queuine tRNA-ribosyltransferase accessory subunit 2 (418 aa).

Residues C325, C327, C330, and H356 each coordinate Zn(2+).

The protein belongs to the queuine tRNA-ribosyltransferase family. QTRT2 subfamily. As to quaternary structure, heterodimer of a catalytic subunit and an accessory subunit. It depends on Zn(2+) as a cofactor.

It localises to the cytoplasm. Functionally, non-catalytic subunit of the queuine tRNA-ribosyltransferase (TGT) that catalyzes the base-exchange of a guanine (G) residue with queuine (Q) at position 34 (anticodon wobble position) in tRNAs with GU(N) anticodons (tRNA-Asp, -Asn, -His and -Tyr), resulting in the hypermodified nucleoside queuosine (7-(((4,5-cis-dihydroxy-2-cyclopenten-1-yl)amino)methyl)-7-deazaguanosine). This chain is Queuine tRNA-ribosyltransferase accessory subunit 2, found in Drosophila erecta (Fruit fly).